We begin with the raw amino-acid sequence, 200 residues long: UPF0301 protein BOV_0485 (200 aa).

The protein belongs to the UPF0301 (AlgH) family.

The polypeptide is UPF0301 protein BOV_0485 (Brucella ovis (strain ATCC 25840 / 63/290 / NCTC 10512)).